A 197-amino-acid chain; its full sequence is Peptide deformylase (197 aa).

The Fe cation site is built by Cys106 and His148. Glu149 is a catalytic residue. His152 provides a ligand contact to Fe cation.

The protein belongs to the polypeptide deformylase family. Fe(2+) serves as cofactor.

The enzyme catalyses N-terminal N-formyl-L-methionyl-[peptide] + H2O = N-terminal L-methionyl-[peptide] + formate. Its function is as follows. Removes the formyl group from the N-terminal Met of newly synthesized proteins. Requires at least a dipeptide for an efficient rate of reaction. N-terminal L-methionine is a prerequisite for activity but the enzyme has broad specificity at other positions. The chain is Peptide deformylase from Mycobacterium leprae (strain TN).